A 403-amino-acid chain; its full sequence is Tyrosine--tRNA ligase (403 aa).

A 'HIGH' region motif is present at residues 42 to 51 (PTAPDLHLGH). A 'KMSKS' region motif is present at residues 226-230 (KMSKS). Lys-229 is an ATP binding site. An S4 RNA-binding domain is found at 336-396 (MPISAVLNKA…GKKAFGRITL (61 aa)).

This sequence belongs to the class-I aminoacyl-tRNA synthetase family. TyrS type 2 subfamily. As to quaternary structure, homodimer.

The protein resides in the cytoplasm. The enzyme catalyses tRNA(Tyr) + L-tyrosine + ATP = L-tyrosyl-tRNA(Tyr) + AMP + diphosphate + H(+). Catalyzes the attachment of tyrosine to tRNA(Tyr) in a two-step reaction: tyrosine is first activated by ATP to form Tyr-AMP and then transferred to the acceptor end of tRNA(Tyr). This is Tyrosine--tRNA ligase from Pseudomonas syringae pv. tomato (strain ATCC BAA-871 / DC3000).